Reading from the N-terminus, the 178-residue chain is Large ribosomal subunit protein uL6 (178 aa).

It belongs to the universal ribosomal protein uL6 family. Part of the 50S ribosomal subunit.

Functionally, this protein binds to the 23S rRNA, and is important in its secondary structure. It is located near the subunit interface in the base of the L7/L12 stalk, and near the tRNA binding site of the peptidyltransferase center. The sequence is that of Large ribosomal subunit protein uL6 from Streptococcus pneumoniae (strain JJA).